The primary structure comprises 479 residues: Anaerobic nitric oxide reductase flavorubredoxin (479 aa).

The tract at residues 30-210 (LRGSSYNSYL…PFSRLVTPKI (181 aa)) is zinc metallo-hydrolase. Residues histidine 79, glutamate 81, aspartate 83, histidine 147, aspartate 166, and histidine 227 each coordinate Fe cation. The 140-residue stretch at 254-393 (ITIVYDTMSN…LCREHGREIA (140 aa)) folds into the Flavodoxin-like domain. FMN-binding positions include 260–264 (TMSNN) and 342–369 (AFGS…EMSL). Residues 423–474 (GPRMQCSVCQWIYDPAKGEPMQDVAPGTPWSEVPDNFLCPECSLGKDVFDEL) enclose the Rubredoxin-like domain. Fe cation-binding residues include cysteine 428, cysteine 431, cysteine 461, and cysteine 464.

The protein in the N-terminal section; belongs to the zinc metallo-hydrolase group 3 family. Homotetramer. It depends on Fe cation as a cofactor. FMN serves as cofactor.

The protein resides in the cytoplasm. It participates in nitrogen metabolism; nitric oxide reduction. Its function is as follows. Anaerobic nitric oxide reductase; uses NADH to detoxify nitric oxide (NO), protecting several 4Fe-4S NO-sensitive enzymes. Has at least 2 reductase partners, only one of which (NorW, flavorubredoxin reductase) has been identified. NO probably binds to the di-iron center; electrons enter from the NorW at rubredoxin and are transferred sequentially to the FMN center and the di-iron center. Also able to function as an aerobic oxygen reductase. This is Anaerobic nitric oxide reductase flavorubredoxin from Escherichia coli (strain UTI89 / UPEC).